A 305-amino-acid polypeptide reads, in one-letter code: Translation initiation factor eIF2B subunit alpha (305 aa).

At Ser-2 the chain carries N-acetylserine. The residue at position 291 (Thr-291) is a Phosphothreonine.

It belongs to the eIF-2B alpha/beta/delta subunits family. In terms of assembly, component of the translation initiation factor 2B (eIF2B) complex which is a heterodecamer of two sets of five different subunits: alpha, beta, gamma, delta and epsilon. Subunits alpha, beta and delta comprise a regulatory subcomplex and subunits epsilon and gamma comprise a catalytic subcomplex. Within the complex, the hexameric regulatory complex resides at the center, with the two heterodimeric catalytic subcomplexes bound on opposite sides.

It is found in the cytoplasm. It localises to the cytosol. In terms of biological role, acts as a component of the translation initiation factor 2B (eIF2B) complex, which catalyzes the exchange of GDP for GTP on the eukaryotic initiation factor 2 (eIF2) complex gamma subunit. Its guanine nucleotide exchange factor activity is repressed when bound to eIF2 complex phosphorylated on the alpha subunit, thereby limiting the amount of methionyl-initiator methionine tRNA available to the ribosome and consequently global translation is repressed. It activates the translation of GCN4 in response to low amino acid, carbon, or purine availability, by suppressing the inhibitory effects of multiple uORFs present in the leader of GCN4 mRNA. It may promote either repression or activation of GCN4 expression depending on amino acid availability. Modulation of GCN3 regulatory function in response to amino acid availability occurs post-translationally. This chain is Translation initiation factor eIF2B subunit alpha, found in Saccharomyces cerevisiae (strain ATCC 204508 / S288c) (Baker's yeast).